The following is a 1480-amino-acid chain: Cystic fibrosis transmembrane conductance regulator (1480 aa).

Over 1–77 the chain is Cytoplasmic; sequence MQRSPLEKAS…KLINALRRCF (77 aa). The helical transmembrane segment at 78-98 threads the bilayer; that stretch reads FWRFMFYGIFLYLGEVTKAVQ. The ABC transmembrane type-1 1 domain maps to 81 to 365; sequence FMFYGIFLYL…WAVQTWYDSL (285 aa). Over 99 to 122 the chain is Extracellular; that stretch reads PLLLGRIIASYDPDNKEERSIAIY. A helical membrane pass occupies residues 123–146; sequence LGIGLCLLFIVRTLLLHPAIFGLH. Residues 147 to 195 lie on the Cytoplasmic side of the membrane; sequence HIGMQMRIAMFSLIYKKTLKLSSRVLDKISIGQLVSLLSNNLNKFDEGL. A helical transmembrane segment spans residues 196–216; the sequence is ALAHFVWIAPLQVALLMGLIW. Topologically, residues 217–222 are extracellular; sequence ELLQAS. A helical transmembrane segment spans residues 223 to 243; that stretch reads AFCGLGFLIVLALFQAGLGRM. At 244–298 the chain is on the cytoplasmic side; it reads MMKYRDQRAGKINERLVITSEMIENIQSVKAYCWEEAMEKMIENLRQTELKLTRK. A helical transmembrane segment spans residues 299–319; that stretch reads AAYVRYFNSSAFFFSGFFVVF. Over 320-339 the chain is Extracellular; the sequence is LSVLPYALIKGIVLRKIFTT. A helical transmembrane segment spans residues 340–358; sequence ISFCIVLRMAVTRQFPWAV. Topologically, residues 359-858 are cytoplasmic; the sequence is QTWYDSLGAI…YLRYITVHKS (500 aa). Residues W401, S434, 458–465, and Q493 each bind ATP; that span reads GSTGAGKT. Residues 423-646 enclose the ABC transporter 1 domain; it reads NGDDSLFFSN…RPDFSSKLMG (224 aa). C524 carries the S-palmitoyl cysteine lipid modification. 2 positions are modified to phosphoserine: S549 and S660. The tract at residues 654–831 is disordered R region; sequence SAERRNSILT…EEINEEDLKE (178 aa). S670 bears the Phosphoserine; by PKA mark. A Glycyl lysine isopeptide (Lys-Gly) (interchain with G-Cter in ubiquitin) cross-link involves residue K688. Phosphoserine is present on residues S700 and S712. T717 is subject to Phosphothreonine. A phosphoserine mark is found at S737, S753, S768, S790, S795, and S813. Residues 859–879 form a helical membrane-spanning segment; it reads LIFVLIWCLVIFLAEVAASLV. Residues 859 to 1155 enclose the ABC transmembrane type-1 2 domain; it reads LIFVLIWCLV…AVNSSIDVDS (297 aa). Over 880-918 the chain is Extracellular; the sequence is VLWLLGNTPLQDKGNSTHSRNNSYAVIITSTSSYYVFYI. 2 N-linked (GlcNAc...) asparagine glycosylation sites follow: N894 and N900. The discontinuously helical transmembrane segment at 919 to 939 threads the bilayer; the sequence is YVGVADTLLAMGFFRGLPLVH. Topologically, residues 940–990 are cytoplasmic; sequence TLITVSKILHNKMLHSVLQAPMSTLNTLKAGGILNRFSKDIAILDDLLPLT. The helical transmembrane segment at 991 to 1011 threads the bilayer; it reads IFDFIQLLLIVIGAIAVVAVL. Residues 1012-1013 are Extracellular-facing; sequence QP. The chain crosses the membrane as a helical span at residues 1014-1034; the sequence is YIFVATVPVIVAFIMLRAYFL. The Cytoplasmic portion of the chain corresponds to 1035 to 1095; the sequence is QTSQQLKQLE…TANWFLYLST (61 aa). Residues 1096–1116 traverse the membrane as a helical segment; it reads LRWFQMRIEMIFVIFFIAVTF. The Extracellular segment spans residues 1117 to 1130; sequence ISILTTGEGEGRVG. The chain crosses the membrane as a helical span at residues 1131 to 1151; it reads IILTLAMNIMSTLQWAVNSSI. Residues 1152 to 1480 lie on the Cytoplasmic side of the membrane; it reads DVDSLMRSVS…TEEEVQDTRL (329 aa). The ABC transporter 2 domain occupies 1210 to 1443; sequence MTVKDLTAKY…RSLFQQAISP (234 aa). ATP is bound by residues Y1219 and 1244 to 1251; that span reads GRTGSGKS. The interval 1386-1480 is interaction with GORASP2; it reads RTLKQAFADC…TEEEVQDTRL (95 aa). A lipid anchor (S-palmitoyl cysteine) is attached at C1395. Residues S1444 and S1456 each carry the phosphoserine modification. The segment at 1452 to 1480 is disordered; it reads HRNSSKCKSKPQIAALKEETEEEVQDTRL. Over residues 1470-1480 the composition is skewed to acidic residues; sequence ETEEEVQDTRL. A PDZ-binding motif is present at residues 1478–1480; the sequence is TRL.

It belongs to the ABC transporter superfamily. ABCC family. CFTR transporter (TC 3.A.1.202) subfamily. In terms of assembly, monomer; does not require oligomerization for channel activity. May form oligomers in the membrane. Interacts with SLC26A3, SLC26A6 and NHERF1. Interacts with SHANK2. Interacts with MYO6. Interacts (via C-terminus) with GOPC (via PDZ domain); this promotes CFTR internalization and thereby decreases channel activity. Interacts with SLC4A7 through NHERF1. Found in a complex with MYO5B and RAB11A. Interacts with ANO1. Interacts with SLC26A8. Interacts with AHCYL1; the interaction increases CFTR activity. Interacts with CSE1L. The core-glycosylated form interacts with GORASP2 (via PDZ GRASP-type 1 domain) in respone to ER stress. Interacts with MARCHF2; the interaction leads to CFTR ubiqtuitination and degradation. Interacts with ADGRG2. N-glycosylated. Post-translationally, phosphorylated; cAMP treatment promotes phosphorylation and activates the channel. Dephosphorylation decreases the ATPase activity (in vitro). Phosphorylation at PKA sites activates the channel. Phosphorylation at PKC sites enhances the response to phosphorylation by PKA. Phosphorylated by AMPK; this inhibits channel activity. In terms of processing, ubiquitinated, leading to its degradation in the lysosome. Deubiquitination by USP10 in early endosomes enhances its endocytic recycling to the cell membrane. Ubiquitinated by RNF185 during ER stress. Ubiquitinated by MARCHF2.

Its subcellular location is the apical cell membrane. The protein resides in the early endosome membrane. The protein localises to the cell membrane. It is found in the recycling endosome membrane. It localises to the endoplasmic reticulum membrane. Its subcellular location is the nucleus. It catalyses the reaction ATP + H2O + closed Cl(-) channel = ADP + phosphate + open Cl(-) channel.. The enzyme catalyses chloride(in) = chloride(out). It carries out the reaction hydrogencarbonate(in) = hydrogencarbonate(out). The catalysed reaction is ATP + H2O = ADP + phosphate + H(+). Epithelial ion channel that plays an important role in the regulation of epithelial ion and water transport and fluid homeostasis. Mediates the transport of chloride ions across the cell membrane. Possesses an intrinsic ATPase activity and utilizes ATP to gate its channel; the passive flow of anions through the channel is gated by cycles of ATP binding and hydrolysis by the ATP-binding domains. The ion channel is also permeable to HCO(3)(-); selectivity depends on the extracellular chloride concentration. Exerts its function also by modulating the activity of other ion channels and transporters. Contributes to the regulation of the pH and the ion content of the epithelial fluid layer. Modulates the activity of the epithelial sodium channel (ENaC) complex, in part by regulating the cell surface expression of the ENaC complex. May regulate bicarbonate secretion and salvage in epithelial cells by regulating the transporter SLC4A7. Can inhibit the chloride channel activity of ANO1. Plays a role in the chloride and bicarbonate homeostasis during sperm epididymal maturation and capacitation. This chain is Cystic fibrosis transmembrane conductance regulator, found in Pongo abelii (Sumatran orangutan).